Reading from the N-terminus, the 239-residue chain is Ribonuclease 3 (239 aa).

Residues 18 to 141 (YTTLEKALGY…LMAGVYLEAG (124 aa)) form the RNase III domain. E54 is a Mg(2+) binding site. D58 is an active-site residue. Mg(2+)-binding residues include S127 and E130. Residue E130 is part of the active site. Residues 168-237 (DYKTALQELT…AYYALQKLKE (70 aa)) enclose the DRBM domain.

Belongs to the ribonuclease III family. As to quaternary structure, homodimer. Mg(2+) is required as a cofactor.

The protein localises to the cytoplasm. It carries out the reaction Endonucleolytic cleavage to 5'-phosphomonoester.. Digests double-stranded RNA. Involved in the processing of primary rRNA transcript to yield the immediate precursors to the large and small rRNAs (23S and 16S). Processes some mRNAs, and tRNAs when they are encoded in the rRNA operon. Processes pre-crRNA and tracrRNA of type II CRISPR loci if present in the organism. The polypeptide is Ribonuclease 3 (Helicobacter pylori (strain G27)).